A 200-amino-acid polypeptide reads, in one-letter code: NADH-quinone oxidoreductase subunit C (200 aa).

It belongs to the complex I 30 kDa subunit family. In terms of assembly, NDH-1 is composed of 14 different subunits. Subunits NuoB, C, D, E, F, and G constitute the peripheral sector of the complex.

It localises to the cell inner membrane. It carries out the reaction a quinone + NADH + 5 H(+)(in) = a quinol + NAD(+) + 4 H(+)(out). Its function is as follows. NDH-1 shuttles electrons from NADH, via FMN and iron-sulfur (Fe-S) centers, to quinones in the respiratory chain. The immediate electron acceptor for the enzyme in this species is believed to be ubiquinone. Couples the redox reaction to proton translocation (for every two electrons transferred, four hydrogen ions are translocated across the cytoplasmic membrane), and thus conserves the redox energy in a proton gradient. This chain is NADH-quinone oxidoreductase subunit C, found in Rhizobium johnstonii (strain DSM 114642 / LMG 32736 / 3841) (Rhizobium leguminosarum bv. viciae).